Reading from the N-terminus, the 165-residue chain is Free methionine-R-sulfoxide reductase (165 aa).

Residues 49-149 enclose the GAF domain; the sequence is LLEDDTLVLG…LRQLVAQLEK (101 aa).

Belongs to the free Met sulfoxide reductase family.

The catalysed reaction is [thioredoxin]-disulfide + L-methionine + H2O = L-methionine (R)-S-oxide + [thioredoxin]-dithiol. Catalyzes the reversible oxidation-reduction of the R-enantiomer of free methionine sulfoxide to methionine. Specific for free L-methionine-(R)-S-oxide. This is Free methionine-R-sulfoxide reductase (msrC) from Escherichia coli (strain K12).